We begin with the raw amino-acid sequence, 72 residues long: Translation initiation factor IF-1 (72 aa).

The 71-residue stretch at 2 to 72 (AKDDVIEVEG…TRGRITYRYK (71 aa)) folds into the S1-like domain. Tyrosine 60 is subject to Phosphotyrosine.

The protein belongs to the IF-1 family. Component of the 30S ribosomal translation pre-initiation complex which assembles on the 30S ribosome in the order IF-2 and IF-3, IF-1 and N-formylmethionyl-tRNA(fMet); mRNA recruitment can occur at any time during PIC assembly.

The protein localises to the cytoplasm. In terms of biological role, one of the essential components for the initiation of protein synthesis. Stabilizes the binding of IF-2 and IF-3 on the 30S subunit to which N-formylmethionyl-tRNA(fMet) subsequently binds. Helps modulate mRNA selection, yielding the 30S pre-initiation complex (PIC). Upon addition of the 50S ribosomal subunit IF-1, IF-2 and IF-3 are released leaving the mature 70S translation initiation complex. This is Translation initiation factor IF-1 from Bacillus subtilis (strain 168).